The chain runs to 454 residues: Protoheme IX farnesyltransferase 1 (454 aa).

A unknown region spans residues 1–186; the sequence is MRTTGFSGLL…AYFELTKPRL (186 aa). A run of 4 helical transmembrane segments spans residues 9-29, 59-79, 87-107, and 113-133; these read LLSA…TAAL, GVAA…WSET, LALA…VATG, and LHLF…AWHL. The segment at 137–164 is disordered; it reads TGSDDAPESPPELAPPVDEEPAATEQPA. Helical transmembrane passes span 186–206, 209–229, 251–271, 276–296, 300–320, 321–341, 377–397, 398–418, and 433–453; these read LMWL…TPTV, VVFT…FNHV, VPVA…LWAF, LLAA…YTLI, NTVQ…LIGY, AAVT…IFLW, HIVF…AVTD, LGWL…WAVV, and FHAS…DSLA. Positions 187–451 are protoheme IX prenyltransferase; sequence MWLLCLVAGA…LVLVAILIDS (265 aa).

In the C-terminal section; belongs to the UbiA prenyltransferase family. Protoheme IX farnesyltransferase subfamily.

The protein localises to the cell membrane. It catalyses the reaction heme b + (2E,6E)-farnesyl diphosphate + H2O = Fe(II)-heme o + diphosphate. It participates in porphyrin-containing compound metabolism; heme O biosynthesis; heme O from protoheme: step 1/1. Converts heme B (protoheme IX) to heme O by substitution of the vinyl group on carbon 2 of heme B porphyrin ring with a hydroxyethyl farnesyl side group. The chain is Protoheme IX farnesyltransferase 1 (ctaB1) from Natronomonas pharaonis (strain ATCC 35678 / DSM 2160 / CIP 103997 / JCM 8858 / NBRC 14720 / NCIMB 2260 / Gabara) (Halobacterium pharaonis).